The primary structure comprises 271 residues: Mitochondrial distribution and morphology protein 12 (271 aa).

The region spanning 1–267 (MSFDINWSTL…WPSWINLDFN (267 aa)) is the SMP-LTD domain. Residue Lys-49 forms a Glycyl lysine isopeptide (Lys-Gly) (interchain with G-Cter in ubiquitin) linkage.

Belongs to the MDM12 family. Component of the ER-mitochondria encounter structure (ERMES) or MDM complex, composed of MMM1, MDM10, MDM12 and MDM34. An MMM1 homodimer associates with one molecule of MDM12 on each side in a pairwise head-to-tail manner, and the SMP-LTD domains of MMM1 and MDM12 generate a continuous hydrophobic tunnel for phospholipid trafficking. Interacts with PUF3.

The protein resides in the mitochondrion outer membrane. It is found in the endoplasmic reticulum membrane. In terms of biological role, component of the ERMES/MDM complex, which serves as a molecular tether to connect the endoplasmic reticulum (ER) and mitochondria. Components of this complex are involved in the control of mitochondrial shape and protein biogenesis, and function in nonvesicular lipid trafficking between the ER and mitochondria. MDM12 is required for the interaction of the ER-resident membrane protein MMM1 and the outer mitochondrial membrane-resident beta-barrel protein MDM10. The MDM12-MMM1 subcomplex functions in the major beta-barrel assembly pathway that is responsible for biogenesis of all mitochondrial outer membrane beta-barrel proteins, and acts in a late step after the SAM complex. The MDM10-MDM12-MMM1 subcomplex further acts in the TOM40-specific pathway after the action of the MDM12-MMM1 complex. Essential for establishing and maintaining the structure of mitochondria and maintenance of mtDNA nucleoids. This chain is Mitochondrial distribution and morphology protein 12, found in Saccharomyces cerevisiae (strain AWRI1631) (Baker's yeast).